A 321-amino-acid chain; its full sequence is MSKPIQMERGVKYRDADKMALIPIKTVVTERQELLRKPEWMKIKLPADSSRIQGIKAAMRKNGLHSVCEEASCPNLSECFNHGTATFMILGAICTRRCPFCDVAHGRPVTPDANEPEKLAQTIKDMGLRYVVITSVDRDDLRDGGAQHFADCISAIRAKNPTIKIETLVPDFRGRMDRALDILTVTPPDVFNHNLENVPRVYRQVRPGANYEWSLKLLERFKEAHPDIPTKSGLMVGLGETNAEIVEVMRDLRRHGVTMLTLGQYLQPSRHHLPVQRYVSPAEFDEMKAEAMAMGFTHAACGPFVRSSYHADLQAKGLEVK.

The [4Fe-4S] cluster site is built by Cys68, Cys73, Cys79, Cys94, Cys98, Cys101, and Ser308. The 218-residue stretch at 80–297 (FNHGTATFMI…KAEAMAMGFT (218 aa)) folds into the Radical SAM core domain.

It belongs to the radical SAM superfamily. Lipoyl synthase family. It depends on [4Fe-4S] cluster as a cofactor.

It is found in the cytoplasm. The enzyme catalyses [[Fe-S] cluster scaffold protein carrying a second [4Fe-4S](2+) cluster] + N(6)-octanoyl-L-lysyl-[protein] + 2 oxidized [2Fe-2S]-[ferredoxin] + 2 S-adenosyl-L-methionine + 4 H(+) = [[Fe-S] cluster scaffold protein] + N(6)-[(R)-dihydrolipoyl]-L-lysyl-[protein] + 4 Fe(3+) + 2 hydrogen sulfide + 2 5'-deoxyadenosine + 2 L-methionine + 2 reduced [2Fe-2S]-[ferredoxin]. Its pathway is protein modification; protein lipoylation via endogenous pathway; protein N(6)-(lipoyl)lysine from octanoyl-[acyl-carrier-protein]: step 2/2. Catalyzes the radical-mediated insertion of two sulfur atoms into the C-6 and C-8 positions of the octanoyl moiety bound to the lipoyl domains of lipoate-dependent enzymes, thereby converting the octanoylated domains into lipoylated derivatives. This chain is Lipoyl synthase, found in Yersinia enterocolitica serotype O:8 / biotype 1B (strain NCTC 13174 / 8081).